Here is a 342-residue protein sequence, read N- to C-terminus: Nucleoid-associated protein Sputcn32_2288 (342 aa).

Belongs to the YejK family.

The protein localises to the cytoplasm. It is found in the nucleoid. In Shewanella putrefaciens (strain CN-32 / ATCC BAA-453), this protein is Nucleoid-associated protein Sputcn32_2288.